Consider the following 305-residue polypeptide: Heterogeneous nuclear ribonucleoprotein A0 (305 aa).

N-acetylmethionine is present on Met-1. Positions 7 to 86 (CKLFIGGLNV…VELKRAVSRE (80 aa)) constitute an RRM 1 domain. At Ser-68 the chain carries Phosphoserine. Lys-80 participates in a covalent cross-link: Glycyl lysine isopeptide (Lys-Gly) (interchain with G-Cter in SUMO2). The residue at position 84 (Ser-84) is a Phosphoserine; by MAPKAPK2. Glycyl lysine isopeptide (Lys-Gly) (interchain with G-Cter in SUMO2) cross-links involve residues Lys-96, Lys-98, Lys-99, and Lys-106. The RRM 2 domain maps to 98–175 (KKLFVGGLKG…HRVEVKKAVP (78 aa)). The residue at position 133 (Lys-133) is an N6-acetyllysine. Arg-139 is modified (omega-N-methylarginine). Residues Lys-154, Lys-159, Lys-172, and Lys-176 each participate in a glycyl lysine isopeptide (Lys-Gly) (interchain with G-Cter in SUMO2) cross-link. Disordered stretches follow at residues 178–211 (DIHA…RDQN) and 265–305 (QSSY…GGSF). Composition is skewed to gly residues over residues 181 to 211 (AGGG…RDQN) and 272 to 284 (KSGG…GSWG). Arg-286 carries the post-translational modification Omega-N-methylarginine. The segment covering 292–305 (YRGGYGGGYGGGSF) has biased composition (gly residues). Arg-293 carries the post-translational modification Asymmetric dimethylarginine; alternate. Arg-293 bears the Dimethylated arginine; alternate mark. Arg-293 is subject to Omega-N-methylarginine; alternate.

In terms of processing, phosphorylated at Ser-84 by MAPKAPK2 in response to LPS treatment, promoting stabilization of GADD45A mRNA. Arg-293 is dimethylated, probably to asymmetric dimethylarginine.

It is found in the nucleus. Its function is as follows. mRNA-binding component of ribonucleosomes. Specifically binds AU-rich element (ARE)-containing mRNAs. Involved in post-transcriptional regulation of cytokines mRNAs. The sequence is that of Heterogeneous nuclear ribonucleoprotein A0 (Hnrnpa0) from Mus musculus (Mouse).